A 412-amino-acid chain; its full sequence is Multifunctional CCA protein (412 aa).

ATP is bound by residues G8 and R11. Positions 8 and 11 each coordinate CTP. The Mg(2+) site is built by E21 and D23. Positions 91, 137, and 140 each coordinate ATP. CTP contacts are provided by R91, R137, and R140. The 102-residue stretch at 228-329 (CGIHTLMSLQ…WRLLQRLDVL (102 aa)) folds into the HD domain.

This sequence belongs to the tRNA nucleotidyltransferase/poly(A) polymerase family. Bacterial CCA-adding enzyme type 1 subfamily. Monomer. Can also form homodimers and oligomers. It depends on Mg(2+) as a cofactor. Ni(2+) is required as a cofactor.

It catalyses the reaction a tRNA precursor + 2 CTP + ATP = a tRNA with a 3' CCA end + 3 diphosphate. The enzyme catalyses a tRNA with a 3' CCA end + 2 CTP + ATP = a tRNA with a 3' CCACCA end + 3 diphosphate. Its function is as follows. Catalyzes the addition and repair of the essential 3'-terminal CCA sequence in tRNAs without using a nucleic acid template. Adds these three nucleotides in the order of C, C, and A to the tRNA nucleotide-73, using CTP and ATP as substrates and producing inorganic pyrophosphate. tRNA 3'-terminal CCA addition is required both for tRNA processing and repair. Also involved in tRNA surveillance by mediating tandem CCA addition to generate a CCACCA at the 3' terminus of unstable tRNAs. While stable tRNAs receive only 3'-terminal CCA, unstable tRNAs are marked with CCACCA and rapidly degraded. The polypeptide is Multifunctional CCA protein (Acinetobacter baumannii (strain SDF)).